The following is a 179-amino-acid chain: Gamma-glutamyl cyclotransferase verK (179 aa).

It belongs to the class-I pyridoxal-phosphate-dependent aminotransferase family.

The enzyme catalyses an alpha-(gamma-L-glutamyl)-L-amino acid = 5-oxo-L-proline + an L-alpha-amino acid. Its pathway is mycotoxin biosynthesis. In terms of biological role, gamma-glutamyl cyclotransferase; part of the gene cluster that mediates the biosynthesis of 11'-deoxyverticillin A, one of the dimeric epipolythiodioxopiperazines (ETPs) from the verticillin family that act as mycotoxins. 11'-deoxyverticillin A is required for normal conidiation. The nonribosomal peptide synthetase verP is speculated to be responsible for condensation of amino acids to form the carbon skeleton of verticillin, whereas the cluster-specific tailoring enzymes are involved in further modifications leading to the production of 11'-deoxyverticillin A. In Clonostachys rogersoniana, this protein is Gamma-glutamyl cyclotransferase verK.